The chain runs to 547 residues: CTP synthase (547 aa).

The segment at 1 to 265 (MARYVFITGG…DQAVLDAFGI (265 aa)) is amidoligase domain. Serine 13 contacts CTP. A UTP-binding site is contributed by serine 13. ATP is bound by residues 14 to 19 (SLGKGL) and aspartate 71. Mg(2+) is bound by residues aspartate 71 and glutamate 139. CTP contacts are provided by residues 146-148 (DIE), 186-191 (KTKPTQ), and lysine 222. Residues 186–191 (KTKPTQ) and lysine 222 contribute to the UTP site. The Glutamine amidotransferase type-1 domain occupies 291 to 546 (RVAIVGKYTQ…VRAAVEVSRL (256 aa)). Glycine 353 provides a ligand contact to L-glutamine. The Nucleophile; for glutamine hydrolysis role is filled by cysteine 380. L-glutamine-binding positions include 381 to 384 (LGMQ), glutamate 404, and arginine 474. Residues histidine 519 and glutamate 521 contribute to the active site.

It belongs to the CTP synthase family. Homotetramer.

The enzyme catalyses UTP + L-glutamine + ATP + H2O = CTP + L-glutamate + ADP + phosphate + 2 H(+). It catalyses the reaction L-glutamine + H2O = L-glutamate + NH4(+). The catalysed reaction is UTP + NH4(+) + ATP = CTP + ADP + phosphate + 2 H(+). It functions in the pathway pyrimidine metabolism; CTP biosynthesis via de novo pathway; CTP from UDP: step 2/2. With respect to regulation, allosterically activated by GTP, when glutamine is the substrate; GTP has no effect on the reaction when ammonia is the substrate. The allosteric effector GTP functions by stabilizing the protein conformation that binds the tetrahedral intermediate(s) formed during glutamine hydrolysis. Inhibited by the product CTP, via allosteric rather than competitive inhibition. In terms of biological role, catalyzes the ATP-dependent amination of UTP to CTP with either L-glutamine or ammonia as the source of nitrogen. Regulates intracellular CTP levels through interactions with the four ribonucleotide triphosphates. The chain is CTP synthase from Cereibacter sphaeroides (strain ATCC 17023 / DSM 158 / JCM 6121 / CCUG 31486 / LMG 2827 / NBRC 12203 / NCIMB 8253 / ATH 2.4.1.) (Rhodobacter sphaeroides).